A 399-amino-acid polypeptide reads, in one-letter code: Acetylornithine aminotransferase (399 aa).

Pyridoxal 5'-phosphate is bound by residues 102–103 (GA) and Phe135. Arg138 contributes to the N(2)-acetyl-L-ornithine binding site. 220–223 (DEIQ) contacts pyridoxal 5'-phosphate. Residue Lys249 is modified to N6-(pyridoxal phosphate)lysine. Residue Ser277 participates in N(2)-acetyl-L-ornithine binding. Residue Thr278 participates in pyridoxal 5'-phosphate binding.

Belongs to the class-III pyridoxal-phosphate-dependent aminotransferase family. ArgD subfamily. In terms of assembly, homodimer. Pyridoxal 5'-phosphate serves as cofactor.

Its subcellular location is the cytoplasm. The enzyme catalyses N(2)-acetyl-L-ornithine + 2-oxoglutarate = N-acetyl-L-glutamate 5-semialdehyde + L-glutamate. Its pathway is amino-acid biosynthesis; L-arginine biosynthesis; N(2)-acetyl-L-ornithine from L-glutamate: step 4/4. This chain is Acetylornithine aminotransferase, found in Oceanobacillus iheyensis (strain DSM 14371 / CIP 107618 / JCM 11309 / KCTC 3954 / HTE831).